The sequence spans 76 residues: Protein krueppel (76 aa).

2 C2H2-type zinc fingers span residues 11–33 (FECSECHKRFTRDHHLKTHLRLH) and 39–61 (YSCPHCPRHFVQVANLRRHLRVH).

This sequence belongs to the krueppel C2H2-type zinc-finger protein family.

Its subcellular location is the nucleus. Its function is as follows. Krueppel is a gap class segmentation protein. This Manduca sexta (Tobacco hawkmoth) protein is Protein krueppel (Kr).